A 341-amino-acid polypeptide reads, in one-letter code: Biotin synthase (341 aa).

The 228-residue stretch at 40-267 (AEIQVSTLLS…RSMVRLSAGR (228 aa)) folds into the Radical SAM core domain. Positions 55, 59, and 62 each coordinate [4Fe-4S] cluster. Positions 99, 130, 190, and 262 each coordinate [2Fe-2S] cluster.

This sequence belongs to the radical SAM superfamily. Biotin synthase family. In terms of assembly, homodimer. [4Fe-4S] cluster serves as cofactor. The cofactor is [2Fe-2S] cluster.

The enzyme catalyses (4R,5S)-dethiobiotin + (sulfur carrier)-SH + 2 reduced [2Fe-2S]-[ferredoxin] + 2 S-adenosyl-L-methionine = (sulfur carrier)-H + biotin + 2 5'-deoxyadenosine + 2 L-methionine + 2 oxidized [2Fe-2S]-[ferredoxin]. It functions in the pathway cofactor biosynthesis; biotin biosynthesis; biotin from 7,8-diaminononanoate: step 2/2. Catalyzes the conversion of dethiobiotin (DTB) to biotin by the insertion of a sulfur atom into dethiobiotin via a radical-based mechanism. This is Biotin synthase from Xylella fastidiosa (strain M23).